The chain runs to 112 residues: Nitrogen regulatory protein P-II (112 aa).

Tyr51 is modified (O-UMP-tyrosine).

It belongs to the P(II) protein family. As to quaternary structure, homotrimer.

The protein localises to the plastid. It localises to the chloroplast. In terms of biological role, P-II indirectly controls the transcription of the glutamine synthetase gene (glnA). P-II prevents NR-II-catalyzed conversion of NR-I to NR-I-phosphate, the transcriptional activator of glnA. When P-II is uridylylated to P-II-UMP, these events are reversed. When the ratio of Gln to 2-ketoglutarate decreases, P-II is uridylylated to P-II-UMP, which causes the deadenylation of glutamine synthetase, so activating the enzyme. The polypeptide is Nitrogen regulatory protein P-II (glnB) (Porphyra purpurea (Red seaweed)).